Reading from the N-terminus, the 374-residue chain is Methylthioribose-1-phosphate isomerase (374 aa).

Aspartate 251 acts as the Proton donor in catalysis.

Belongs to the eIF-2B alpha/beta/delta subunits family. MtnA subfamily.

Its subcellular location is the cytoplasm. The protein localises to the nucleus. It carries out the reaction 5-(methylsulfanyl)-alpha-D-ribose 1-phosphate = 5-(methylsulfanyl)-D-ribulose 1-phosphate. It functions in the pathway amino-acid biosynthesis; L-methionine biosynthesis via salvage pathway; L-methionine from S-methyl-5-thio-alpha-D-ribose 1-phosphate: step 1/6. Catalyzes the interconversion of methylthioribose-1-phosphate (MTR-1-P) into methylthioribulose-1-phosphate (MTRu-1-P). In Oryza sativa subsp. japonica (Rice), this protein is Methylthioribose-1-phosphate isomerase (IDI2).